The chain runs to 61 residues: Photosystem II reaction center protein K (61 aa).

Residues 1–24 constitute a propeptide that is removed on maturation; that stretch reads MLNIFSLIWICLNSALYSSGFFFG. Residues 36–56 form a helical membrane-spanning segment; sequence IIDFMPVIPVFFFLLAFVWQA.

It belongs to the PsbK family. PSII is composed of 1 copy each of membrane proteins PsbA, PsbB, PsbC, PsbD, PsbE, PsbF, PsbH, PsbI, PsbJ, PsbK, PsbL, PsbM, PsbT, PsbX, PsbY, PsbZ, Psb30/Ycf12, at least 3 peripheral proteins of the oxygen-evolving complex and a large number of cofactors. It forms dimeric complexes.

It localises to the plastid. The protein resides in the chloroplast thylakoid membrane. One of the components of the core complex of photosystem II (PSII). PSII is a light-driven water:plastoquinone oxidoreductase that uses light energy to abstract electrons from H(2)O, generating O(2) and a proton gradient subsequently used for ATP formation. It consists of a core antenna complex that captures photons, and an electron transfer chain that converts photonic excitation into a charge separation. The chain is Photosystem II reaction center protein K from Coffea arabica (Arabian coffee).